The sequence spans 159 residues: MIALYPGSFDPITLGHLDVIERASRLFSKVIVAVLKNPNKTPLFSPEQRQAQISLSTAHLKNVEVDTFSGLTVAYARQRGAKVIVRGLRVLSDFDVELQMAHTNKLLAPELETLFLATASEHSFVSSSLVKEVAKLGGPIDHLVPAPVIRDLRERFPLA.

Ser8 is a substrate binding site. ATP contacts are provided by residues 8-9 and His16; that span reads SF. Substrate-binding residues include Lys40, Thr72, and Arg86. Residues 87–89, Glu97, and 122–128 contribute to the ATP site; these read GLR and HSFVSSS.

The protein belongs to the bacterial CoaD family. As to quaternary structure, homohexamer. Requires Mg(2+) as cofactor.

The protein localises to the cytoplasm. The catalysed reaction is (R)-4'-phosphopantetheine + ATP + H(+) = 3'-dephospho-CoA + diphosphate. It functions in the pathway cofactor biosynthesis; coenzyme A biosynthesis; CoA from (R)-pantothenate: step 4/5. Reversibly transfers an adenylyl group from ATP to 4'-phosphopantetheine, yielding dephospho-CoA (dPCoA) and pyrophosphate. This chain is Phosphopantetheine adenylyltransferase, found in Synechococcus sp. (strain JA-2-3B'a(2-13)) (Cyanobacteria bacterium Yellowstone B-Prime).